Consider the following 493-residue polypeptide: Mitochondrial distribution and morphology protein 10 (493 aa).

The protein belongs to the MDM10 family. As to quaternary structure, component of the ER-mitochondria encounter structure (ERMES) or MDM complex, composed of MMM1, MDM10, MDM12 and MDM34. Associates with the mitochondrial outer membrane sorting assembly machinery SAM(core) complex, which consists of SAM35, SAM37 and SAM50, to form a SAM(holo) complex.

It is found in the mitochondrion outer membrane. In terms of biological role, component of the ERMES/MDM complex, which serves as a molecular tether to connect the endoplasmic reticulum and mitochondria. Components of this complex are involved in the control of mitochondrial shape and protein biogenesis and may function in phospholipid exchange. MDM10 is involved in the late assembly steps of the general translocase of the mitochondrial outer membrane (TOM complex). Functions in the TOM40-specific route of the assembly of outer membrane beta-barrel proteins, including the association of TOM40 with the receptor TOM22 and small TOM proteins. Can associate with the SAM(core) complex as well as the MDM12-MMM1 complex, both involved in late steps of the major beta-barrel assembly pathway, that is responsible for biogenesis of all outer membrane beta-barrel proteins. May act as a switch that shuttles between both complexes and channels precursor proteins into the TOM40-specific pathway. Plays a role in mitochondrial morphology and in the inheritance of mitochondria. The polypeptide is Mitochondrial distribution and morphology protein 10 (Saccharomyces cerevisiae (strain ATCC 204508 / S288c) (Baker's yeast)).